A 525-amino-acid polypeptide reads, in one-letter code: Glutamate--cysteine ligase (525 aa).

It belongs to the glutamate--cysteine ligase type 1 family. Type 1 subfamily.

It catalyses the reaction L-cysteine + L-glutamate + ATP = gamma-L-glutamyl-L-cysteine + ADP + phosphate + H(+). Its pathway is sulfur metabolism; glutathione biosynthesis; glutathione from L-cysteine and L-glutamate: step 1/2. The chain is Glutamate--cysteine ligase from Pseudomonas putida (strain ATCC 47054 / DSM 6125 / CFBP 8728 / NCIMB 11950 / KT2440).